The chain runs to 190 residues: Surfactant protein C (190 aa).

The propeptide occupies methionine 1 to leucine 24. 2 S-palmitoyl cysteine lipidation sites follow: cysteine 28 and cysteine 29. A propeptide spanning residues histidine 59–threonine 190 is cleaved from the precursor. Residues phenylalanine 94–threonine 190 form the BRICHOS domain. An intrachain disulfide couples cysteine 121 to cysteine 182.

It is found in the secreted. It localises to the extracellular space. The protein localises to the surface film. In terms of biological role, pulmonary surfactant associated proteins promote alveolar stability by lowering the surface tension at the air-liquid interface in the peripheral air spaces. The polypeptide is Surfactant protein C (SFTPC) (Bos taurus (Bovine)).